The primary structure comprises 409 residues: Probable sodium/metabolite cotransporter BASS6, chloroplastic (409 aa).

A chloroplast-targeting transit peptide spans 1-49; it reads MSVITTPIETLHLKSTLRLLPRAVYRSQRIQVFPPNIFSNTSLSSPLRI. Transmembrane regions (helical) follow at residues 100 to 120, 121 to 141, 170 to 190, 191 to 211, 221 to 241, 253 to 273, 285 to 305, 316 to 336, and 381 to 401; these read ILPHVVLASTILALIYPPSFT, WFTSRYFVPALGFLMFAVGIN, VLGFIFGLAAVSLFQLPTPIG, AGIMLVSCVSGAQLSNYATFL, IVMTSLSTATAVLVTPMLSLL, GMISSILQVVIAPIAAGLLLN, PFLPILSVLDTACCVGAPLAL, ATILLLVTMFHLSAFLAGYFL, and IPPAISTVVMSLMGFTLVLIW.

The protein belongs to the bile acid:sodium symporter (BASS) (TC 2.A.28) family.

It localises to the membrane. It is found in the plastid. The protein resides in the chloroplast envelope. Its function is as follows. May function as sodium-coupled metabolite transporter across the chloroplast envelope. This Arabidopsis thaliana (Mouse-ear cress) protein is Probable sodium/metabolite cotransporter BASS6, chloroplastic (BASS6).